Consider the following 359-residue polypeptide: MNIYDQLQAVEDRYEELGELLSDPDVVSDTKRFMELSREEANTRETVTAYREYKQVIQNISDAEEMIKDASGDAELEEMAKEELKESKAAKEEYEEKLKILLLPKDPNDDKNIILEIRGAAGGDEAALFAGDLLTMYQKYAETQGWRFEVMESSVNGVGGIKEVVAMVSGQSVYSKLKYESGAHRVQRVPVTESQGRVHTSTATVLVMPEVEEVEYEIDQKDLRVDIYHASGAGGQNVNKVATAVRMVHIPTGIKVEMQEERTQQKNRDKAMKIIRARVADHFAQIAQDEQDAERKSTVGTGDRSERIRTYNFPQNRVTDHRIGLTLQKLDTILSGKMDEVIDALVMYDQTQKLEALNK.

Position 236 is an N5-methylglutamine (Q236).

This sequence belongs to the prokaryotic/mitochondrial release factor family. Methylated by PrmC. Methylation increases the termination efficiency of RF1.

The protein resides in the cytoplasm. In terms of biological role, peptide chain release factor 1 directs the termination of translation in response to the peptide chain termination codons UAG and UAA. The polypeptide is Peptide chain release factor 1 (Streptococcus agalactiae serotype Ia (strain ATCC 27591 / A909 / CDC SS700)).